The chain runs to 375 residues: POU domain, class 3, transcription factor 1-A (375 aa).

3 disordered regions span residues 1 to 29 (MAAT…RMHQ), 67 to 138 (PASD…HQPL), and 151 to 200 (MLGP…PSSD). 3 stretches are compositionally biased toward polar residues: residues 107 to 117 (VHQQSPSSHAW), 129 to 138 (SPSSNSHQPL), and 151 to 160 (MLGPQASSLH). The segment covering 162–177 (SMRDPLHDDPGVHDTQ) has biased composition (basic and acidic residues). The 75-residue stretch at 194–268 (EDAPSSDDLE…LLNKWLEETD (75 aa)) folds into the POU-specific domain. The segment at residues 286 to 345 (KRKKRTSIEVGVKGALENHFLKCPKPSAHEITSLADSLQLEKEVVRVWFCNRRQKEKRMT) is a DNA-binding region (homeobox).

It belongs to the POU transcription factor family. Class-3 subfamily. In terms of tissue distribution, in embryos at the neural fold stage, localized primarily in the anterior neural plate, and localized mostly in the anterior region of the nerve cord of neurula stage embryos. In tailbud stages, expressed predominantly in the eye and brain, with weak expression along the length of the nerve cord. In adults, expressed in skin and brain.

Its subcellular location is the nucleus. Functionally, acts as a transcription factor. May play a role in neuronal differentiation. In Xenopus laevis (African clawed frog), this protein is POU domain, class 3, transcription factor 1-A (pou3f1-a).